The following is a 644-amino-acid chain: Cyclin-dependent kinase C-2 C (644 aa).

One can recognise a Protein kinase domain in the interval 105-389 (FQKLEKIGQG…ASSALNSEYF (285 aa)). ATP-binding positions include 111–119 (IGQGTYSSV) and Lys-134. Residue Tyr-116 is modified to Phosphotyrosine. The active-site Proton acceptor is Asp-229. Thr-263 is subject to Phosphothreonine. The Nuclear localization signal motif lies at 420–427 (RKRANLKL). Residues 565 to 576 (SKLSRIGERHGS) show a composition bias toward basic and acidic residues. Residues 565–591 (SKLSRIGERHGSLDGSGLDFSQREEDS) form a disordered region.

The protein belongs to the protein kinase superfamily. CMGC Ser/Thr protein kinase family. CDC2/CDKX subfamily. Post-translationally, autophosphorylated. As to expression, expressed specifically in flowers and pollen.

Its subcellular location is the nucleus. This chain is Cyclin-dependent kinase C-2 C, found in Arabidopsis thaliana (Mouse-ear cress).